The chain runs to 513 residues: ABC transporter H family member 2 (513 aa).

Positions 39–280 (LTMKNIHKTY…EHYQKLYKEC (242 aa)) constitute an ABC transporter domain. An ATP-binding site is contributed by 75–82 (GTSGGGKT). Residues 291–471 (VTSVFKNDDD…SSSYSNNNNN (181 aa)) form a disordered region. Residues 324-360 (SYNNNNSNLNNNSNSNSNNNSNNNNSKNYASSSSSSS) show a composition bias toward low complexity. The span at 361-386 (VLNGKLSQSTVNNSSIYNHNNDSPFF) shows a compositional bias: polar residues. Residues 387-471 (NSNNNNNINN…SSSYSNNNNN (85 aa)) show a composition bias toward low complexity.

This sequence belongs to the ABC transporter superfamily.

This is ABC transporter H family member 2 (abcH2) from Dictyostelium discoideum (Social amoeba).